The following is a 371-amino-acid chain: O-antigen chain mannosyltransferase C (371 aa).

The protein belongs to the glycosyltransferase group 1 family. Glycosyltransferase 4 subfamily.

The enzyme catalyses N-acetyl-alpha-D-glucosaminyl-di-trans,octa-cis-undecaprenyl diphosphate + GDP-alpha-D-mannose = alpha-D-mannosyl-(1-&gt;3)-N-acetyl-alpha-D-glucosaminyl-di-trans,octa-cis-undecaprenyl diphosphate + GDP + H(+). Its pathway is bacterial outer membrane biogenesis; LPS O-antigen biosynthesis. Its function is as follows. Mannosyltransferase involved in the biosynthesis of the repeat unit of the lipopolysaccharide (LPS) O-antigen region. Catalyzes the transfer of a single alpha-(1-&gt;3)-linked mannose residue to the acceptor N-acetyl-glucosaminyl-diphospho-undecaprenol during the synthesis of the adapter region. The sequence is that of O-antigen chain mannosyltransferase C from Escherichia coli.